We begin with the raw amino-acid sequence, 310 residues long: MTAQTQELTKAQQYNFNKLQKRIRRNTGQAIADFNMIEDGDRIMVCLSGGKDSFTMLDILMSLQKSAPISFELVAVNLDQKQPGFPEHVLPEYLDSLGVEYKIVEEDTYSIVQDKVPEGKTTCALCSRLRRGILYRTAKELGATKIALGHHRDDILETLFLNMFYGGKMKGMPPKLVSDNGEHVVIRPLAYCREKDIIKYSDMRGYPIIPCNLCGSQPNLQRQAVKQMLNDWDKRFPGRIETMFRAMQNVVPSHLADFSLFDFKSIDKNSGVINGGDIGFDKEEIAPQVVEDEDLVMEFDPSLQLNVTNI.

Positions 48-53 (SGGKDS) match the PP-loop motif motif. [4Fe-4S] cluster contacts are provided by Cys-123, Cys-126, and Cys-214.

Belongs to the TtcA family. Homodimer. Mg(2+) is required as a cofactor. [4Fe-4S] cluster serves as cofactor.

It localises to the cytoplasm. It catalyses the reaction cytidine(32) in tRNA + S-sulfanyl-L-cysteinyl-[cysteine desulfurase] + AH2 + ATP = 2-thiocytidine(32) in tRNA + L-cysteinyl-[cysteine desulfurase] + A + AMP + diphosphate + H(+). The protein operates within tRNA modification. In terms of biological role, catalyzes the ATP-dependent 2-thiolation of cytidine in position 32 of tRNA, to form 2-thiocytidine (s(2)C32). The sulfur atoms are provided by the cysteine/cysteine desulfurase (IscS) system. This Vibrio cholerae serotype O1 (strain ATCC 39541 / Classical Ogawa 395 / O395) protein is tRNA-cytidine(32) 2-sulfurtransferase.